Reading from the N-terminus, the 482-residue chain is Auxin transporter-like protein 4 (482 aa).

Over 1–59 the chain is Cytoplasmic; it reads MLSQNQAEEAIVTNMNETEQEGGSSLEEIAEDQSMFNFKSFLWHGGSVWDAWFSCASNQ. A helical membrane pass occupies residues 60–77; sequence VAQVLLTLPYSFSQLGMV. The Extracellular portion of the chain corresponds to 78-79; it reads SG. The helical transmembrane segment at 80–100 threads the bilayer; it reads IVFQIFYGLIGSWTAYLISVL. Over 101-135 the chain is Cytoplasmic; sequence YVEYRARKEKENVNFKNHVIQWFEVLDGLLGRYWK. The helical transmembrane segment at 136–156 threads the bilayer; that stretch reads ALGLAFNCTFLLFGSVIQLIA. The Extracellular segment spans residues 157-172; that stretch reads CASNIYYINDKLDKRT. Residues 173–193 traverse the membrane as a helical segment; it reads WTYIFGACCATTVFIPSFHNY. At 194–196 the chain is on the cytoplasmic side; sequence RIW. Residues 197 to 217 form a helical membrane-spanning segment; the sequence is SFLGLGMTTYTAWYMAIAAIV. The Extracellular segment spans residues 218–232; the sequence is NGQIENVVHSGPTKL. Residues 233 to 253 form a helical membrane-spanning segment; that stretch reads VLYFTGATNILYTFGGHAVTV. Over 254-266 the chain is Cytoplasmic; the sequence is EIMHAMWKPQKFK. A helical membrane pass occupies residues 267 to 287; it reads YIYFLATLYVFTLTIPSAVAV. The Extracellular portion of the chain corresponds to 288–314; the sequence is YWAFGDELLNHSNAFSLLPKNGFRDAA. Residue Asn-297 is glycosylated (N-linked (GlcNAc...) asparagine). The helical transmembrane segment at 315 to 335 threads the bilayer; it reads VILMLIHQFITFGFACTPLYF. Over 336 to 356 the chain is Cytoplasmic; sequence VWEKVIGMHDTKSICLRALVR. The helical transmembrane segment at 357–377 threads the bilayer; the sequence is LPVVIPIWFLAIIFPFFGPIN. Position 378 (Ser-378) is a topological domain, extracellular. Residues 379–399 traverse the membrane as a helical segment; the sequence is AVGALLVTFTVYIIPALAHML. Topologically, residues 400 to 422 are cytoplasmic; that stretch reads TYRTASARKNAVEKPPSFLPSWT. The helical transmembrane segment at 423–443 threads the bilayer; that stretch reads AVYVLNAFIVVWVLVVGFGFG. Topologically, residues 444–482 are extracellular; the sequence is GWASMTNFIRQIDTFGLFAKCYQCKPPTPPQAPSPHARH.

Belongs to the amino acid/polyamine transporter 2 family. Amino acid/auxin permease (AAAP) (TC 2.A.18.1) subfamily. In terms of tissue distribution, shoots and roots of nodulating plants, at low levels.

The protein resides in the cell membrane. Carrier protein involved in proton-driven auxin influx. Mediates the formation of auxin gradient from developing leaves (site of auxin biosynthesis) to tips by contributing to the loading of auxin in vascular tissues and facilitating acropetal (base to tip) auxin transport within inner tissues of the root apex, and basipetal (tip to base) auxin transport within outer tissues of the root apex. May be involved in lateral roots and nodules formation. The sequence is that of Auxin transporter-like protein 4 (LAX4) from Medicago truncatula (Barrel medic).